We begin with the raw amino-acid sequence, 75 residues long: Small ribosomal subunit protein bS18 (75 aa).

This sequence belongs to the bacterial ribosomal protein bS18 family. In terms of assembly, part of the 30S ribosomal subunit. Forms a tight heterodimer with protein bS6.

Binds as a heterodimer with protein bS6 to the central domain of the 16S rRNA, where it helps stabilize the platform of the 30S subunit. In Moorella thermoacetica (strain ATCC 39073 / JCM 9320), this protein is Small ribosomal subunit protein bS18.